Reading from the N-terminus, the 2299-residue chain is Acetyl-CoA carboxylase dmxL1 (2299 aa).

A compositionally biased stretch (low complexity) spans 21–39; the sequence is TSIPASVPASAPPSSSAPH. Positions 21-41 are disordered; sequence TSIPASVPASAPPSSSAPHAA. The region spanning 75 to 583 is the Biotin carboxylation domain; the sequence is VITNVLIANN…TTGWLDELIT (509 aa). Residues 227–424 enclose the ATP-grasp 1 domain; sequence QVAIDADGIV…LPAAQLQIAM (198 aa). 258–315 is a binding site for ATP; sequence AKEIGFPVMIKASEGGGGKGIRKCEQEEGFEALYNAASSEIPGSPIFIMKLAGNARHL. Mg(2+)-binding residues include E381, E395, and N397. E381, E395, and N397 together coordinate Mn(2+). The 75-residue stretch at 710-784 folds into the Biotinyl-binding domain; that stretch reads LEQENDPTQL…EPGDVLGILT (75 aa). K751 is subject to N6-biotinyllysine. The tract at residues 1159–1208 is disordered; sequence DMEMSSQLSTPSTPATPPTPPYENGKQSKGVGSISDMSNLIENPDKEPTR. In terms of domain architecture, CoA carboxyltransferase N-terminal spans 1539 to 1887; that stretch reads PTKALEWLQP…KKNTLVPIGP (349 aa). Residues 1891–2205 form the CoA carboxyltransferase C-terminal domain; that stretch reads PWDRDIVCSP…EEHILKRIAT (315 aa).

It depends on biotin as a cofactor. Mg(2+) serves as cofactor. The cofactor is Mn(2+).

The enzyme catalyses hydrogencarbonate + acetyl-CoA + ATP = malonyl-CoA + ADP + phosphate + H(+). It catalyses the reaction N(6)-biotinyl-L-lysyl-[protein] + hydrogencarbonate + ATP = N(6)-carboxybiotinyl-L-lysyl-[protein] + ADP + phosphate + H(+). The protein operates within secondary metabolite biosynthesis. It participates in lipid metabolism; malonyl-CoA biosynthesis; malonyl-CoA from acetyl-CoA: step 1/1. Functionally, acetyl-CoA carboxylase; part of the gene cluster that mediates the biosynthesis of the dimeric xanthones cryptosporioptides. The pathway begins with the synthesis of atrochrysone thioester by the polyketide synthase dmx-nrPKS. The atrochrysone carboxyl ACP thioesterase dmxR1 then breaks the thioester bond and releases the atrochrysone carboxylic acid from dmx-nrPKS. Atrochrysone carboxylic acid is decarboxylated by the decarboxylase dmxR15, and oxidized by the anthrone oxygenase dmxR16 to yield emodin. Emodin is then reduced to emodin hydroquinone by the oxidoreductase dmxR7. A-ring reduction by the short chain dehydrogenase dmxR18, dehydration by the scytalone dehydratase-like protein dmxR17 and probable spontaneous re-oxidation, results in overall deoxygenation to chrysophanol. Baeyer-Villiger oxidation by the Baeyer-Villiger monooxygenase (BVMO) dmxR6 then yields monodictylactone in equilibrium with monodictyphenone. In the case of the cryptosporioptides biosynthesis, monodictylactone is reduced at C-12 to an alcohol (by the short chain dehydrogenases dmxR12 or dmxR8) and hydroxylated at C-5 by dmxR9, yielding the electron-rich aromatic which could eliminate H(2)O to form the ortho-quinonemethide, followed by tautomerisation to paraquinone and complete the formal reduction to produce the 10-methylgroup. Conjugate addition of C-4a-OH to the resulting paraquinone by the monooxygenase dmxR10 then gives cyclohexadienone, which is then reduced at C-5 by the short chain dehydrogenase dmxR3 to give the dihydroxanthone. The 6,7-epoxide in the cryptosporioptides could be introduced by the cytochrome P450 monooxygenase dmxL3. The highly reducing PKS dmxL2 manufactures butyrate, which is further carboxylated by dmxL1 to form ethylmalonate. It is not yet clear whether the carboxylation occurs while the butyrate is attached to the ACP of dmxL2, but this unusual fungal metabolite could then be esterified to O-5 by the O-acetyltransferase dmxR13. Finally, dimerization performed by dmxR5 gives the observed dimers cryptosporioptides A, B and C as the final products of the pathway. This chain is Acetyl-CoA carboxylase dmxL1, found in Cryptosporiopsis sp. (strain 8999).